The chain runs to 501 residues: Glycine betaine/proline/ectoine/pipecolic acid transporter OusA (501 aa).

Topologically, residues 1–38 (MKLKRKRVKPIALDDVTIIDDGRLRKAITAAALGNAME) are cytoplasmic. Residues 39–59 (WFDFGVYGFVAYALGQVFFPG) form a helical membrane-spanning segment. Over 60-66 (ADPGVQM) the chain is Periplasmic. The helical transmembrane segment at 67 to 87 (IAALATFSVPFLIRPLGGVFF) threads the bilayer. Over 88–98 (GALGDKYGRQK) the chain is Cytoplasmic. Residues 99-119 (ILAITIIIMSISTFCIGLIPS) form a helical membrane-spanning segment. The Periplasmic portion of the chain corresponds to 120 to 122 (YER). The chain crosses the membrane as a helical span at residues 123–143 (IGIWAPILLLLAKMAQGFSVG). Residues 144 to 170 (GEYTGASIFVAEYSPDRKRGFMGSWLD) lie on the Cytoplasmic side of the membrane. Residues 171–191 (FGSIAGFVLGAGVVVLISTLI) form a helical membrane-spanning segment. At 192 to 195 (GEQA) the chain is on the periplasmic side. The chain crosses the membrane as a helical span at residues 196–216 (FLAWGWRLPFFLALPLGLIGL). Residues 217–261 (YLRHALEETPAFRQHVEKLEQNDRDGLKAGPGVSFREIATHHWKS) are Cytoplasmic-facing. Residues 262–282 (LLVCIGLVIATNVTYYMLLTY) traverse the membrane as a helical segment. At 283–298 (MPSYLSHSLHYSENHG) the chain is on the periplasmic side. Residues 299–319 (VLIIIAIMIGMLFVQPVMGLL) form a helical membrane-spanning segment. The Cytoplasmic portion of the chain corresponds to 320 to 326 (SDRFGRK). A helical transmembrane segment spans residues 327–347 (PFVVIGSVAMFFLAVPSFMLI). Residues 348 to 350 (NSD) are Periplasmic-facing. The chain crosses the membrane as a helical span at residues 351–371 (IIGLIFLGLLMLAVILNAFTG). Residues 372–391 (VMASTLPALFPTHIRYSALA) lie on the Cytoplasmic side of the membrane. A helical membrane pass occupies residues 392-412 (SAFNISVLIAGLTPTVAAWLV). The Periplasmic segment spans residues 413-417 (ESSQN). Residues 418 to 438 (LYMPAYYLMVIAVIGLLTGLF) traverse the membrane as a helical segment. The Cytoplasmic segment spans residues 439 to 501 (MKETANKPLK…LVAQHPRIND (63 aa)). Residues 461-495 (KEILQEHHDNIEHKIEDITQQIAELEAKRQLLVAQ) adopt a coiled-coil conformation.

The protein belongs to the major facilitator superfamily. Sugar transporter (TC 2.A.1.1) family.

It localises to the cell inner membrane. Involved in uptake and accumulation of various osmoprotectants. Allows the uptake of glycine betaine, proline, ectoine, and pipecolic acid. May be a contributory factor in the infection progression within the host. The protein is Glycine betaine/proline/ectoine/pipecolic acid transporter OusA of Dickeya dadantii (strain 3937) (Erwinia chrysanthemi (strain 3937)).